The following is a 154-amino-acid chain: Iron-sulfur cluster assembly 2 homolog, mitochondrial (154 aa).

A mitochondrion-targeting transit peptide spans 1–8 (MAASRALS). Fe cation is bound by residues cysteine 79, cysteine 144, and cysteine 146.

This sequence belongs to the HesB/IscA family. Heterotetramer; forms a dimer of dimers with IBA57. Interacts with [2Fe-2S]-ISCA2 forming the heterodimer [2Fe- 2S]-ISCA2-IBA57 complex; [2Fe-2S] cluster binding is absolutely required to promote the complex formation.

It is found in the mitochondrion. Its function is as follows. Involved in the maturation of mitochondrial 4Fe-4S proteins functioning late in the iron-sulfur cluster assembly pathway. May be involved in the binding of an intermediate of Fe/S cluster assembly. The sequence is that of Iron-sulfur cluster assembly 2 homolog, mitochondrial (Isca2) from Mus musculus (Mouse).